The primary structure comprises 101 residues: Urease subunit beta (101 aa).

It belongs to the urease beta subunit family. As to quaternary structure, heterotrimer of UreA (gamma), UreB (beta) and UreC (alpha) subunits. Three heterotrimers associate to form the active enzyme.

The protein resides in the cytoplasm. The catalysed reaction is urea + 2 H2O + H(+) = hydrogencarbonate + 2 NH4(+). It participates in nitrogen metabolism; urea degradation; CO(2) and NH(3) from urea (urease route): step 1/1. This is Urease subunit beta from Jannaschia sp. (strain CCS1).